Consider the following 297-residue polypeptide: Universal stress protein MT2698 (297 aa).

Residues glycine 13, alanine 43, 117 to 123, arginine 127, 131 to 132, glycine 165, aspartate 198, 262 to 268, and 276 to 278 each bind ATP; these read GCLGSGR, SV, GSRGRGG, and SVG.

It belongs to the universal stress protein A family. As to quaternary structure, homodimer.

In terms of biological role, may play a role in the establishment of a persistent infection (latency) in the host. This chain is Universal stress protein MT2698, found in Mycobacterium tuberculosis (strain CDC 1551 / Oshkosh).